The following is a 368-amino-acid chain: DNA replication and repair protein RecF (368 aa).

Residue Gly30–Thr37 participates in ATP binding.

It belongs to the RecF family.

It is found in the cytoplasm. The RecF protein is involved in DNA metabolism; it is required for DNA replication and normal SOS inducibility. RecF binds preferentially to single-stranded, linear DNA. It also seems to bind ATP. The chain is DNA replication and repair protein RecF from Chlorobaculum tepidum (strain ATCC 49652 / DSM 12025 / NBRC 103806 / TLS) (Chlorobium tepidum).